The primary structure comprises 56 residues: MAVPKRRTSRSNTRSRRSQWKAKVPTLAKCSRGHVIRPHTVCGTCGRYNDRQVLDV.

Basic residues predominate over residues 1–20 (MAVPKRRTSRSNTRSRRSQW). The tract at residues 1 to 24 (MAVPKRRTSRSNTRSRRSQWKAKV) is disordered.

This sequence belongs to the bacterial ribosomal protein bL32 family.

This chain is Large ribosomal subunit protein bL32, found in Frankia casuarinae (strain DSM 45818 / CECT 9043 / HFP020203 / CcI3).